Reading from the N-terminus, the 344-residue chain is Protein RecA (344 aa).

Residue 66–73 (GPESSGKT) coordinates ATP.

This sequence belongs to the RecA family.

The protein resides in the cytoplasm. Functionally, can catalyze the hydrolysis of ATP in the presence of single-stranded DNA, the ATP-dependent uptake of single-stranded DNA by duplex DNA, and the ATP-dependent hybridization of homologous single-stranded DNAs. It interacts with LexA causing its activation and leading to its autocatalytic cleavage. This Methylobacillus flagellatus protein is Protein RecA.